A 112-amino-acid polypeptide reads, in one-letter code: Cell cycle protein GpsB (112 aa).

A coiled-coil region spans residues 32–75 (LDDIIKDYETYISTIEELRQENTRLKEEVKQAKKRQEAAQTTVS).

The protein belongs to the GpsB family. In terms of assembly, forms polymers through the coiled coil domains. Interacts with PBP1, MreC and EzrA.

Its subcellular location is the cytoplasm. In terms of biological role, divisome component that associates with the complex late in its assembly, after the Z-ring is formed, and is dependent on DivIC and PBP2B for its recruitment to the divisome. Together with EzrA, is a key component of the system that regulates PBP1 localization during cell cycle progression. Its main role could be the removal of PBP1 from the cell pole after pole maturation is completed. Also contributes to the recruitment of PBP1 to the division complex. Not essential for septum formation. In Streptococcus mutans serotype c (strain ATCC 700610 / UA159), this protein is Cell cycle protein GpsB.